Consider the following 314-residue polypeptide: uncharacterized protein (314 aa).

The interval 1–70 is disordered; sequence MAGNSQRRGA…QGRHKKTDDT (70 aa). Basic residues predominate over residues 44–65; that stretch reads RPHHPAGKRAAKAARQAQGRHK. Gly-265, Ile-285, and Leu-294 together coordinate S-adenosyl-L-methionine.

This sequence belongs to the class IV-like SAM-binding methyltransferase superfamily. RNA methyltransferase TrmH family.

This is an uncharacterized protein from Mycolicibacterium gilvum (strain PYR-GCK) (Mycobacterium gilvum (strain PYR-GCK)).